The chain runs to 130 residues: Large ribosomal subunit protein bL19 (130 aa).

This sequence belongs to the bacterial ribosomal protein bL19 family.

Functionally, this protein is located at the 30S-50S ribosomal subunit interface and may play a role in the structure and function of the aminoacyl-tRNA binding site. This chain is Large ribosomal subunit protein bL19, found in Psychrobacter arcticus (strain DSM 17307 / VKM B-2377 / 273-4).